Reading from the N-terminus, the 285-residue chain is NADPH-dependent 7-cyano-7-deazaguanine reductase (285 aa).

Substrate is bound at residue 91–93; it reads IES. Residue 93 to 94 participates in NADPH binding; sequence SK. Cys-193 serves as the catalytic Thioimide intermediate. The Proton donor role is filled by Asp-200. 232–233 serves as a coordination point for substrate; that stretch reads HE. 261 to 262 contacts NADPH; sequence RG.

Belongs to the GTP cyclohydrolase I family. QueF type 2 subfamily. In terms of assembly, homodimer.

The protein localises to the cytoplasm. The enzyme catalyses 7-aminomethyl-7-carbaguanine + 2 NADP(+) = 7-cyano-7-deazaguanine + 2 NADPH + 3 H(+). Its pathway is tRNA modification; tRNA-queuosine biosynthesis. Its function is as follows. Catalyzes the NADPH-dependent reduction of 7-cyano-7-deazaguanine (preQ0) to 7-aminomethyl-7-deazaguanine (preQ1). In Shewanella frigidimarina (strain NCIMB 400), this protein is NADPH-dependent 7-cyano-7-deazaguanine reductase.